The chain runs to 405 residues: Cystathionine gamma-lyase (405 aa).

Arg62, Tyr114, and Arg119 together coordinate substrate. Position 212 is an N6-(pyridoxal phosphate)lysine (Lys212). Glu339 is a substrate binding site.

The protein belongs to the trans-sulfuration enzymes family. In terms of assembly, homotetramer. Interacts with CALM in a calcium-dependent manner. The cofactor is pyridoxal 5'-phosphate. Highly expressed in liver. Also in muscle and lower expression in most tissues except heart, pituitary gland, spleen, thymus, and vascular tissue, where it is hardly detected.

The protein localises to the cytoplasm. The catalysed reaction is L,L-cystathionine + H2O = 2-oxobutanoate + L-cysteine + NH4(+). The enzyme catalyses L-cysteine + H2O = hydrogen sulfide + pyruvate + NH4(+) + H(+). It carries out the reaction L-homocysteine + H2O = 2-oxobutanoate + hydrogen sulfide + NH4(+) + H(+). It catalyses the reaction L-homoserine = 2-oxobutanoate + NH4(+). The catalysed reaction is L-selenocystathionine + H2O = L-selenocysteine + 2-oxobutanoate + NH4(+). The protein operates within amino-acid biosynthesis; L-cysteine biosynthesis; L-cysteine from L-homocysteine and L-serine: step 2/2. With respect to regulation, inhibited by propargylglycine, trifluoroalanine and aminoethoxyvinylglycine. Functionally, catalyzes the last step in the trans-sulfuration pathway from L-methionine to L-cysteine in a pyridoxal-5'-phosphate (PLP)-dependent manner, which consists on cleaving the L,L-cystathionine molecule into L-cysteine, ammonia and 2-oxobutanoate. Part of the L-cysteine derived from the trans-sulfuration pathway is utilized for biosynthesis of the ubiquitous antioxidant glutathione. Besides its role in the conversion of L-cystathionine into L-cysteine, it utilizes L-cysteine and L-homocysteine as substrates (at much lower rates than L,L-cystathionine) to produce the endogenous gaseous signaling molecule hydrogen sulfide (H2S). In vitro, it converts two L-cysteine molecules into lanthionine and H2S, also two L-homocysteine molecules to homolanthionine and H2S, which can be particularly relevant under conditions of severe hyperhomocysteinemia (which is a risk factor for cardiovascular disease, diabetes, and Alzheimer's disease). Lanthionine and homolanthionine are structural homologs of L,L-cystathionine that differ by the absence or presence of an extra methylene group, respectively. Acts as a cysteine-protein sulfhydrase by mediating sulfhydration of target proteins: sulfhydration consists of converting -SH groups into -SSH on specific cysteine residues of target proteins such as GAPDH, PTPN1 and NF-kappa-B subunit RELA, thereby regulating their function. By generating the gasotransmitter H2S, it participates in a number of physiological processes such as vasodilation, bone protection, and inflammation. Plays an essential role in myogenesis by contributing to the biogenesis of H2S in skeletal muscle tissue. Can also accept homoserine as substrate. Catalyzes the elimination of selenocystathionine (which can be derived from the diet) to yield selenocysteine, ammonia and 2-oxobutanoate. This Homo sapiens (Human) protein is Cystathionine gamma-lyase (CTH).